Reading from the N-terminus, the 743-residue chain is Ribosome biogenesis protein BOP1 homolog (743 aa).

WD repeat units lie at residues 365–404 (GHTATVRSVSVSPNGQYLATGCDDHLVRVYEVQTGRLMKR), 575–615 (KFSE…RRFK), 617–655 (SGGVTTCLSIHPEGDNFLVGDTTSHTSWFDMDFSDKPYK), 659–701 (SHKG…DYNK), and 712–743 (KHQRSVYAVAWHPSLAWLFTSTEDGVVTAWTE).

It belongs to the WD repeat BOP1/ERB1 family.

Its subcellular location is the nucleus. The protein localises to the nucleolus. It is found in the nucleoplasm. Its function is as follows. Required for maturation of ribosomal RNAs and formation of the large ribosomal subunit. The sequence is that of Ribosome biogenesis protein BOP1 homolog from Leishmania braziliensis.